The primary structure comprises 303 residues: MYIQILGSAAGGGFPQWNCNCVNCAGFRDGSLRAHARTQSSIALSDDGINWVLCNASPDIRAQLQGFAPMQPGRALRDTGISAIVLMDSQIDHTTGLLSLREGCPHQVWCTDMVHEDLSTGFPLFEMLKHWNGGLSWNRIELQGSFVIPACPNLRFTPFPLRSAAPPYSPHRFDPHPGDNIGLLVEDTRTGGKLFYAPGLGKVDEALAEKMRDADCLLVDGTMWDDDEMQRRGVGTRTGREMGHLAQNGPGGMLEVLEGFPEPRKVLIHINNTNPILDEDSPERAELARRNVEVAFDGMSIEL.

This sequence belongs to the PqqB family.

Its pathway is cofactor biosynthesis; pyrroloquinoline quinone biosynthesis. May be involved in the transport of PQQ or its precursor to the periplasm. The chain is Coenzyme PQQ synthesis protein B from Pseudomonas syringae pv. syringae (strain B728a).